The sequence spans 295 residues: Indole-3-glycerol phosphate synthase (295 aa).

It belongs to the TrpC family.

It carries out the reaction 1-(2-carboxyphenylamino)-1-deoxy-D-ribulose 5-phosphate + H(+) = (1S,2R)-1-C-(indol-3-yl)glycerol 3-phosphate + CO2 + H2O. It participates in amino-acid biosynthesis; L-tryptophan biosynthesis; L-tryptophan from chorismate: step 4/5. The polypeptide is Indole-3-glycerol phosphate synthase (Prochlorococcus marinus (strain MIT 9301)).